Consider the following 122-residue polypeptide: Large ribosomal subunit protein uL14 (122 aa).

This sequence belongs to the universal ribosomal protein uL14 family. Part of the 50S ribosomal subunit. Forms a cluster with proteins L3 and L19. In the 70S ribosome, L14 and L19 interact and together make contacts with the 16S rRNA in bridges B5 and B8.

Binds to 23S rRNA. Forms part of two intersubunit bridges in the 70S ribosome. This is Large ribosomal subunit protein uL14 from Chlorobium phaeobacteroides (strain BS1).